We begin with the raw amino-acid sequence, 419 residues long: L-rhamnose isomerase (419 aa).

Mn(2+) is bound by residues H262, D294, and D296.

It belongs to the rhamnose isomerase family. Homotetramer. It depends on Mn(2+) as a cofactor.

The protein localises to the cytoplasm. The catalysed reaction is L-rhamnopyranose = L-rhamnulose. It functions in the pathway carbohydrate degradation; L-rhamnose degradation; glycerone phosphate from L-rhamnose: step 1/3. Its function is as follows. Catalyzes the interconversion of L-rhamnose and L-rhamnulose. The chain is L-rhamnose isomerase from Salmonella enteritidis PT4 (strain P125109).